A 222-amino-acid chain; its full sequence is MASDVGSHPLTVTRFRCRVHYVYNKLLILTLFAPVILESVIYVSGPQGGNVTLVSNFTSNISARWFRWDGNDSHLICFYKRGEGLSTPYVGLSLSCAANQITIFNLTLNDSGRYGAEGFTRSGENETFLWYNLTVKPKPLETTPASNVTTIVTTTSTVTDAKSNVTGNVSLAPQLRAVAGFSHQTPLENNTHLALVGVVVFLVLIVVCIMGWWKLLCSKSEL.

N-linked (GlcNAc...) asparagine; by host glycans are attached at residues N50, N56, N60, N71, N105, N109, N125, N132, N147, N164, N168, and N189. Residues L193–W213 form a helical membrane-spanning segment.

It belongs to the RL11 family. In terms of processing, highly glycosylated.

The protein resides in the secreted. It is found in the host cell membrane. Functionally, plays a role in modulating the host immune response and affecting host cytokine production. Structurally and functionally homolog of host CEACAM1, induces endothelial cell angiogenesis. This is CEACAM1-like protein UL7 (UL7) from Homo sapiens (Human).